The chain runs to 798 residues: ATP-dependent RecD2 DNA helicase (798 aa).

370 to 374 serves as a coordination point for ATP; the sequence is GTGKT.

It belongs to the RecD family. RecD2 subfamily. As to quaternary structure, interacts with SSB (sbbA).

Its subcellular location is the cytoplasm. It localises to the nucleoid. It catalyses the reaction Couples ATP hydrolysis with the unwinding of duplex DNA at the replication fork by translocating in the 5'-3' direction. This creates two antiparallel DNA single strands (ssDNA). The leading ssDNA polymer is the template for DNA polymerase III holoenzyme which synthesizes a continuous strand.. The enzyme catalyses ATP + H2O = ADP + phosphate + H(+). In terms of biological role, in vivo may favor replication restart by preventing RecA from binding to blocked replication forks, avoiding unnecessary recombination during replication restart. Acts as a negative modulator of the RecA-ssDNA filament, may dissasemble RecA threads, can act as both a positive and negative regulator of strand exchange. Probably stabilizes or aids normal replication fork progression, is important for survival after treatment with DNA-damaging agents that can result in replication fork stress. Overcomes the inhibition of replication restart by RecA/RecO, probably by displacing RecA. Increasing levels inhibit PriA-dependent DNA replication initiation (but have little effect on ongoing replication) in vitro; may act by disturbing SsbA assembly. Probably has a role in recombinational DNA repair. Does not seem to contribute to mismatch repair. Has 5'-3' helicase activity that is probably ATP-dependent. In Bacillus subtilis (strain 168), this protein is ATP-dependent RecD2 DNA helicase.